The following is a 92-amino-acid chain: DNA-directed RNA polymerase subunit omega (92 aa).

Belongs to the RNA polymerase subunit omega family. In terms of assembly, the RNAP catalytic core consists of 2 alpha, 1 beta, 1 beta' and 1 omega subunit. When a sigma factor is associated with the core the holoenzyme is formed, which can initiate transcription.

It carries out the reaction RNA(n) + a ribonucleoside 5'-triphosphate = RNA(n+1) + diphosphate. Functionally, promotes RNA polymerase assembly. Latches the N- and C-terminal regions of the beta' subunit thereby facilitating its interaction with the beta and alpha subunits. In Shewanella denitrificans (strain OS217 / ATCC BAA-1090 / DSM 15013), this protein is DNA-directed RNA polymerase subunit omega.